Here is a 259-residue protein sequence, read N- to C-terminus: MIQIDALPAFSDNYIWLLQDTANRRCAVVDPGDDAPVLAWLGKHPGWVLEAILVTHHHHDHVGGVEALKHATGAQVFGPANERIPARDIALEDGAQVHVLGLAFDVLAMPGHTLGHIAYYTAQSPTPLLFSGDTLFAAGCGRLFEGTPEQMHHSLQRLAALPEQTQVYCAHEYTLSNLRFARAVEPHSEPVQQRFEAVTQLRADNRISLPSTIGIERQTNPFLRTAEISVKQKADEWKGHSNPTQASVFAALRSWKDVF.

7 residues coordinate Zn(2+): H56, H58, D60, H61, H112, D133, and H171.

It belongs to the metallo-beta-lactamase superfamily. Glyoxalase II family. Monomer. Zn(2+) serves as cofactor.

It carries out the reaction an S-(2-hydroxyacyl)glutathione + H2O = a 2-hydroxy carboxylate + glutathione + H(+). It participates in secondary metabolite metabolism; methylglyoxal degradation; (R)-lactate from methylglyoxal: step 2/2. Thiolesterase that catalyzes the hydrolysis of S-D-lactoyl-glutathione to form glutathione and D-lactic acid. This Pseudomonas entomophila (strain L48) protein is Hydroxyacylglutathione hydrolase.